Consider the following 222-residue polypeptide: UPF0502 protein PBPRB0676 (222 aa).

Belongs to the UPF0502 family.

The sequence is that of UPF0502 protein PBPRB0676 from Photobacterium profundum (strain SS9).